Reading from the N-terminus, the 477-residue chain is Pentatricopeptide repeat-containing protein At5g47360 (477 aa).

PPR repeat units lie at residues 129 to 163 (NVKT…NVCA), 164 to 198 (DTVA…GLYP), 199 to 233 (DVIT…DCVL), 234 to 264 (NSVT…MEKE), 273 to 307 (NAVT…GCMP), 308 to 343 (NRVT…GGVS), 344 to 378 (LSEC…GVRP), 379 to 413 (DGLA…DVKS), and 416 to 450 (DSDI…KMRL).

This sequence belongs to the PPR family. P subfamily.

The chain is Pentatricopeptide repeat-containing protein At5g47360 from Arabidopsis thaliana (Mouse-ear cress).